Here is a 719-residue protein sequence, read N- to C-terminus: MEKILFYLFLIGIAVKAQICPKRCVCQILSPNLATLCAKKGLLFVPPNIDRRTVELRLADNFVTNIKRKDFANMTSLVDLTLSRNTISFITPHAFADLRNLRALHLNSNRLTKITNDMFSGLSNLHHLILNNNQLTLISSTAFDDVFALEELDLSYNNLETIPWDAVEKMVSLHTLSLDHNMIDNIPKGTFSHLHKMTRLDVTSNKLQKLPPDPLFQRAQVLATSGIISPSTFALSFGGNPLHCNCELLWLRRLSREDDLETCASPPLLTGRYFWSIPEEEFLCEPPLITRHTHEMRVLEGQRATLRCKARGDPEPAIHWISPEGKLISNATRSLVYDNGTLDILITTVKDTGAFTCIASNPAGEATQIVDLHIIKLPHLLNSTNHIHEPDPGSSDISTSTKSGSNTSSSNGDTKLSQDKIVVAEATSSTALLKFNFQRNIPGIRMFQIQYNGTYDDTLVYRMIPPTSKTFLVNNLAAGTMYDLCVLAIYDDGITSLTATRVVGCIQFTTEQDYVRCHFMQSQFLGGTMIIIIGGIIVASVLVFIIILMIRYKVCNNNGQHKVTKVSNVYSQTNGAQIQGCSVTLPQSVSKQAVGHEENAQCCKATSDNVIQSSETCSSQDSSTTTSALPPSWTSSTSVSQKQKRKTGTKPSTEPQNEAVTNVESQNTNRNNSTALQLASRPPDSVTEGPTSKRAHIKPNALLTNVDQIVQETQRLELI.

Positions 1-17 are cleaved as a signal peptide; sequence MEKILFYLFLIGIAVKA. Residues 18–51 enclose the LRRNT domain; it reads QICPKRCVCQILSPNLATLCAKKGLLFVPPNIDR. The Extracellular portion of the chain corresponds to 18-529; sequence QICPKRCVCQ…MQSQFLGGTM (512 aa). 7 LRR repeats span residues 52–73, 76–97, 100–121, 124–145, 148–169, 172–193, and 196–217; these read RTVELRLADNFVTNIKRKDFAN, SLVDLTLSRNTISFITPHAFAD, NLRALHLNSNRLTKITNDMFSG, NLHHLILNNNQLTLISSTAFDD, ALEELDLSYNNLETIPWDAVEK, SLHTLSLDHNMIDNIPKGTFSH, and KMTRLDVTSNKLQKLPPDPLFQ. N-linked (GlcNAc...) asparagine glycosylation occurs at Asn-73. In terms of domain architecture, LRRCT spans 240–286; it reads NPLHCNCELLWLRRLSREDDLETCASPPLLTGRYFWSIPEEEFLCEP. Residues 287-373 enclose the Ig-like domain; that stretch reads PLITRHTHEM…GEATQIVDLH (87 aa). Cys-308 and Cys-357 are disulfide-bonded. 5 N-linked (GlcNAc...) asparagine glycosylation sites follow: Asn-330, Asn-339, Asn-382, Asn-406, and Asn-452. A disordered region spans residues 385–414; it reads NHIHEPDPGSSDISTSTKSGSNTSSSNGDT. The span at 393 to 414 shows a compositional bias: low complexity; sequence GSSDISTSTKSGSNTSSSNGDT. The 90-residue stretch at 414–503 folds into the Fibronectin type-III domain; it reads TKLSQDKIVV…ITSLTATRVV (90 aa). Residues 530-550 form a helical membrane-spanning segment; sequence IIIIGGIIVASVLVFIIILMI. Residues 551–719 are Cytoplasmic-facing; that stretch reads RYKVCNNNGQ…VQETQRLELI (169 aa). The span at 615-627 shows a compositional bias: low complexity; that stretch reads ETCSSQDSSTTTS. Residues 615-694 are disordered; the sequence is ETCSSQDSST…SVTEGPTSKR (80 aa). Composition is skewed to polar residues over residues 628–641 and 649–677; these read ALPPSWTSSTSVSQ and TKPSTEPQNEAVTNVESQNTNRNNSTALQ.

This sequence belongs to the LRFN family. Can form heteromeric complexes with LRFN1, LRFN2, LRFN3 and LFRN4. Able to form homomeric complexes across cell junctions, between adjacent cells. Does not interact with DLG1, DLG2, DLG3 and DLG4.

It is found in the membrane. Functionally, cell adhesion molecule that mediates homophilic cell-cell adhesion in a Ca(2+)-independent manner. Promotes neurite outgrowth in hippocampal neurons. This Homo sapiens (Human) protein is Leucine-rich repeat and fibronectin type-III domain-containing protein 5 (LRFN5).